The following is a 296-amino-acid chain: Nucleotide-binding protein SMU_1306c (296 aa).

G13–T20 is an ATP binding site. Residue D63–S66 coordinates GTP.

It belongs to the RapZ-like family.

Displays ATPase and GTPase activities. The protein is Nucleotide-binding protein SMU_1306c of Streptococcus mutans serotype c (strain ATCC 700610 / UA159).